The chain runs to 718 residues: Receptor-like protein 36 (718 aa).

Positions 1 to 26 are cleaved as a signal peptide; that stretch reads MIRSLSYCFLTIYFFLSILPLPNTIA. Over 27-695 the chain is Extracellular; it reads CPTRLLCRSD…SESEDQLLNW (669 aa). LRR repeat units follow at residues 70 to 94, 95 to 118, 120 to 141, 143 to 165, 166 to 188, 189 to 213, 214 to 238, 239 to 261, 262 to 286, 288 to 310, 312 to 334, 335 to 359, 360 to 383, 384 to 406, 407 to 431, 433 to 454, 455 to 480, and 481 to 505; these read DAIL…IGNL, SHLT…IGNL, QLES…SFAN, TKLS…LANL, TSLS…DLSG, LHNL…LLMI, PSLV…TFSL, SRLR…SISK, LVNL…ISKV, NLTS…VWRS, KLDY…EVID, GASL…ICKV, KDLY…LKYS, TYFH…LFIK, DSQL…LINC, RIEF…WLGS, LPYL…AYLG, and FPSI…YFAN. An N-linked (GlcNAc...) asparagine glycan is attached at Asn93. N-linked (GlcNAc...) asparagine glycans are attached at residues Asn141 and Asn164. N-linked (GlcNAc...) asparagine glycosylation is present at Asn199. An N-linked (GlcNAc...) asparagine glycan is attached at Asn288. Residues Asn373 and Asn393 are each glycosylated (N-linked (GlcNAc...) asparagine). N-linked (GlcNAc...) asparagine glycosylation occurs at Asn528. LRR repeat units follow at residues 550–574, 575–598, 599–622, and 624–647; these read FEGF…IGLL, SELR…LANI, TNLE…LGKL, and FLSN…QFAT. N-linked (GlcNAc...) asparagine glycosylation is found at Asn581, Asn597, Asn610, Asn629, and Asn649. The helical transmembrane segment at 696–716 threads the bilayer; the sequence is IAAAIAFGPGMFCGLVIGHIF. Residues 717 to 718 lie on the Cytoplasmic side of the membrane; it reads TS.

This sequence belongs to the RLP family.

The protein localises to the cell membrane. The polypeptide is Receptor-like protein 36 (Arabidopsis thaliana (Mouse-ear cress)).